Consider the following 337-residue polypeptide: MREPAFWRRPSSLLSRLLIPVGALYGAIAARRLSRTGLRAGVPVICVGNYHLGGAGKTPTVLALAGILRSLGETPVVISRGYGGRLRGPVRVDPDRHAAADVGDEPLMMARTLPVIVSRQRAAGVAPARALGASVILMDDGFQNPTLARDISLIVIDGDRGLGNRRIFPAGPLRAPLPPQLARTDALVIVGPGSAADDIAASIEARGGPVLRARVVPDEASVAALRGRRVLAFAGIGDPSRFFRGLRACGVDVAAERAFADHHPFSQRDVAALQSAAEKDGLTLVTTEKDLARLRNNENIAAFAQAVAPFAVTLAFDDETALRSFLMDGIAKVRRLD.

Residue 51-58 (HLGGAGKT) coordinates ATP.

The protein belongs to the LpxK family.

The enzyme catalyses a lipid A disaccharide + ATP = a lipid IVA + ADP + H(+). It participates in glycolipid biosynthesis; lipid IV(A) biosynthesis; lipid IV(A) from (3R)-3-hydroxytetradecanoyl-[acyl-carrier-protein] and UDP-N-acetyl-alpha-D-glucosamine: step 6/6. In terms of biological role, transfers the gamma-phosphate of ATP to the 4'-position of a tetraacyldisaccharide 1-phosphate intermediate (termed DS-1-P) to form tetraacyldisaccharide 1,4'-bis-phosphate (lipid IVA). This Nitrobacter winogradskyi (strain ATCC 25391 / DSM 10237 / CIP 104748 / NCIMB 11846 / Nb-255) protein is Tetraacyldisaccharide 4'-kinase.